A 5596-amino-acid chain; its full sequence is Midasin (5596 aa).

At Met-1 the chain carries N-acetylmethionine. AAA-ATPase protomer regions lie at residues 307–591 (SVCK…TSKL), 659–978 (LIEQ…ASNP), 1048–1316 (KEPT…QEEI), and 1362–1616 (HIVW…NKMG). 329–336 (GPIGCGKT) is an ATP binding site. Positions 517-537 (SSVGCEQAPEEVSEARRENKR) are disordered. ATP contacts are provided by residues 677–684 (GETGTGKT) and 1084–1091 (GETSVGKT). Thr-1177 carries the post-translational modification Phosphothreonine. 1390–1397 (GDTGCGKT) contacts ATP. Lys-1683 carries the post-translational modification N6-acetyllysine. AAA-ATPase protomer stretches follow at residues 1738–1995 (RLLR…AVFK) and 2053–2313 (MKCV…IYIS). Residues 1753-1760 (GSPGVGKT) and 2066-2073 (GPASVGKT) contribute to the ATP site. Ser-1754 is subject to Phosphoserine. The interval 2418-4691 (SLRAHETWGD…EGEGMKDVSD (2274 aa)) is linker. The tract at residues 3989-4008 (LVESDKEEQPDFLPRPTDGA) is disordered. The residue at position 4212 (Thr-4212) is a Phosphothreonine. Ser-4538 bears the Phosphoserine mark. Disordered stretches follow at residues 4669–4688 (ATEF…GMKD) and 4700–5260 (EDTF…SRES). Over residues 4702–4724 (TFQKGQEKDKEDPDSKSDIKGED) the composition is skewed to basic and acidic residues. Acidic residues predominate over residues 4741-4757 (ELEEQEEDDEKSDSEGG). Residues Ser-4752 and Ser-4754 each carry the phosphoserine modification. Residues 4758 to 4780 (DLDKHMGDLNGEEADKLDERLWG) are compositionally biased toward basic and acidic residues. The span at 4781–4794 (DDDEEEDEEEEDNK) shows a compositional bias: acidic residues. Residues 4822 to 4834 (NKDKSQQDKKEEK) are compositionally biased toward basic and acidic residues. Residues 4835–4844 (EEAEADDGGQ) are compositionally biased toward acidic residues. Basic and acidic residues predominate over residues 4845–4855 (GEDKINEQIDE). Positions 4877–4888 (EALDLPDDLNLD) are enriched in acidic residues. Ser-4889 is subject to Phosphoserine. Residues 4896–4908 (EDTDNEEGEEENP) show a composition bias toward acidic residues. At Thr-4898 the chain carries Phosphothreonine. Positions 4909–4928 (LEIKEKPEEAGHEAEERGET) are enriched in basic and acidic residues. Phosphoserine is present on residues Ser-4937 and Ser-4946. Residues 4940-4966 (EPEEGPSEDDKAEGEEEMDTGADDQDG) are compositionally biased toward acidic residues. Residues 4968–4989 (AAQHPEEHSEEQQQSVEEKDKE) are compositionally biased toward basic and acidic residues. Residues 5007 to 5021 (QEEEEREDSDTEEQV) show a composition bias toward acidic residues. Phosphoserine is present on Ser-5015. The span at 5033–5046 (CGQTGVENMQNTQA) shows a compositional bias: polar residues. Residues 5054 to 5064 (PEKEQGKEEHG) are compositionally biased toward basic and acidic residues. The span at 5088-5101 (KHTRKNTQSFKRKP) shows a compositional bias: basic residues. Basic and acidic residues predominate over residues 5105–5115 (DNERSMGDHNE). The segment covering 5132–5141 (QGPAQQPQAQ) has biased composition (low complexity). Acidic residues predominate over residues 5181 to 5197 (QEEEEIEDTLMDTEEQE). Basic and acidic residues-rich tracts occupy residues 5198 to 5213 (EFKA…EEIK) and 5233 to 5260 (KTEE…SRES). One can recognise a VWFA domain in the interval 5384 to 5583 (QICLAIDDSS…ALPETLSDAL (200 aa)).

Belongs to the midasin family. In terms of assembly, associates with pre-60S ribosomes in the nucleoplasm. Interacts (via its hexameric AAA ATPase ring) with the PELP1 complex (via PELP1); the interaction is regulated by SUMO conjugation of PELP1 and is crucial for recruitment of MDN1 to the pre-ribosomal particle. Interacts (via VWFA/MIDAS domain) with WDR12 (via UBL domain). Interacts (via VWFA/MIDAS domain) with NLE1 (via UBL domain).

The protein resides in the nucleus. The protein localises to the nucleolus. It is found in the nucleoplasm. It localises to the cytoplasm. Nuclear chaperone required for maturation and nuclear export of pre-60S ribosome subunits. Functions at successive maturation steps to remove ribosomal factors at critical transition points, first driving the exit of early pre-60S particles from the nucleolus and then driving late pre-60S particles from the nucleus. At an early stage in 60S maturation, mediates the dissociation of the PeBoW complex (PES1-BOP1-WDR12) from early pre-60S particles, rendering them competent for export from the nucleolus to the nucleoplasm. Subsequently recruited to the nucleoplasmic particles through interaction with SUMO-conjugated PELP1 complex. This binding is only possible if the 5S RNP at the central protuberance has undergone the rotation to complete its maturation. This is Midasin (MDN1) from Homo sapiens (Human).